The following is a 544-amino-acid chain: Chaperonin GroEL 1 (544 aa).

ATP-binding positions include 29–32, 86–90, Gly-413, and Asp-495; these read TLGP and DGTTT. Residues 525–544 form a disordered region; that stretch reads PEPKTNTPASSGSGMSDYDY. A compositionally biased stretch (polar residues) spans 528-538; that stretch reads KTNTPASSGSG.

It belongs to the chaperonin (HSP60) family. In terms of assembly, forms a cylinder of 14 subunits composed of two heptameric rings stacked back-to-back. Interacts with the co-chaperonin GroES.

It is found in the cytoplasm. It catalyses the reaction ATP + H2O + a folded polypeptide = ADP + phosphate + an unfolded polypeptide.. Together with its co-chaperonin GroES, plays an essential role in assisting protein folding. The GroEL-GroES system forms a nano-cage that allows encapsulation of the non-native substrate proteins and provides a physical environment optimized to promote and accelerate protein folding. The chain is Chaperonin GroEL 1 from Synechococcus sp. (strain JA-2-3B'a(2-13)) (Cyanobacteria bacterium Yellowstone B-Prime).